We begin with the raw amino-acid sequence, 544 residues long: CTP synthase (544 aa).

An amidoligase domain region spans residues 1-267 (MAKFVFITGG…AQRVLQILNL (267 aa)). Residue S13 coordinates CTP. UTP is bound at residue S13. 14-19 (SIGKGI) serves as a coordination point for ATP. An L-glutamine-binding site is contributed by Y54. D71 provides a ligand contact to ATP. Mg(2+) contacts are provided by D71 and E141. CTP contacts are provided by residues 148-150 (DIE), 188-193 (KTKPTQ), and K224. Residues 188–193 (KTKPTQ) and K224 contribute to the UTP site. Positions 292–534 (EIAIVGKYVR…IEAALRSRSR (243 aa)) constitute a Glutamine amidotransferase type-1 domain. Position 354 (G354) interacts with L-glutamine. C381 (nucleophile; for glutamine hydrolysis) is an active-site residue. Residues 382 to 385 (LGMQ), E405, and R462 contribute to the L-glutamine site. Active-site residues include H507 and E509.

It belongs to the CTP synthase family. As to quaternary structure, homotetramer.

It catalyses the reaction UTP + L-glutamine + ATP + H2O = CTP + L-glutamate + ADP + phosphate + 2 H(+). It carries out the reaction L-glutamine + H2O = L-glutamate + NH4(+). The enzyme catalyses UTP + NH4(+) + ATP = CTP + ADP + phosphate + 2 H(+). Its pathway is pyrimidine metabolism; CTP biosynthesis via de novo pathway; CTP from UDP: step 2/2. Allosterically activated by GTP, when glutamine is the substrate; GTP has no effect on the reaction when ammonia is the substrate. The allosteric effector GTP functions by stabilizing the protein conformation that binds the tetrahedral intermediate(s) formed during glutamine hydrolysis. Inhibited by the product CTP, via allosteric rather than competitive inhibition. In terms of biological role, catalyzes the ATP-dependent amination of UTP to CTP with either L-glutamine or ammonia as the source of nitrogen. Regulates intracellular CTP levels through interactions with the four ribonucleotide triphosphates. This chain is CTP synthase, found in Synechococcus sp. (strain JA-3-3Ab) (Cyanobacteria bacterium Yellowstone A-Prime).